We begin with the raw amino-acid sequence, 786 residues long: Ribosome biogenesis protein BOP1 homolog (786 aa).

The span at 1 to 11 (MAKKSAIKRKV) shows a compositional bias: basic residues. A disordered region spans residues 1–161 (MAKKSAIKRK…NSDTSDEEDI (161 aa)). Residues 17-26 (INEQASVSEQ) are compositionally biased toward polar residues. Composition is skewed to acidic residues over residues 44-53 (EDTTDDEGID), 60-72 (TSDD…DEEG), and 82-114 (SGED…DDAK). Positions 122–135 (KATLSKTTGDSSNI) are enriched in polar residues. Over residues 141–150 (PRRDPSKPEY) the composition is skewed to basic and acidic residues. Residues 151 to 160 (ENSDTSDEED) show a composition bias toward acidic residues. 7 WD repeats span residues 447-488 (GHTD…RTIE), 490-528 (NDVV…KLLV), 572-614 (THFK…SQIP), 617-655 (KSKG…LIKK), 658-697 (TNSK…KPYQ), 701-740 (LHRN…DLLQ), and 756-786 (RDEF…RLYT).

This sequence belongs to the WD repeat BOP1/ERB1 family.

The protein resides in the nucleus. The protein localises to the nucleolus. It localises to the nucleoplasm. Its function is as follows. Required for maturation of ribosomal RNAs and formation of the large ribosomal subunit. In Drosophila grimshawi (Hawaiian fruit fly), this protein is Ribosome biogenesis protein BOP1 homolog.